The following is a 148-amino-acid chain: Putative fusion protein (148 aa).

The tract at residues 1–34 (MDRALSTFPGDDDETNERNINHREKTSGEHGHYE) is disordered. A compositionally biased stretch (basic and acidic residues) spans 16-34 (NERNINHREKTSGEHGHYE).

It belongs to the poxviruses fusion protein family. Homotrimer, covalently linked.

The protein resides in the virion membrane. This is Putative fusion protein from Sheeppox virus (strain KS-1) (SPPV).